The following is a 358-amino-acid chain: Protein-glutamate methylesterase/protein-glutamine glutaminase 1 (358 aa).

In terms of domain architecture, Response regulatory spans 8 to 125 (RVLIVDDSAV…ARGLEGYAEE (118 aa)). Aspartate 59 is subject to 4-aspartylphosphate. The 196-residue stretch at 157–352 (PVPGSALRFR…LERVAERLIA (196 aa)) folds into the CheB-type methylesterase domain. Active-site residues include serine 177, histidine 203, and aspartate 299.

It belongs to the CheB family. In terms of processing, phosphorylated by CheA. Phosphorylation of the N-terminal regulatory domain activates the methylesterase activity.

It localises to the cytoplasm. The enzyme catalyses [protein]-L-glutamate 5-O-methyl ester + H2O = L-glutamyl-[protein] + methanol + H(+). It catalyses the reaction L-glutaminyl-[protein] + H2O = L-glutamyl-[protein] + NH4(+). In terms of biological role, involved in chemotaxis. Part of a chemotaxis signal transduction system that modulates chemotaxis in response to various stimuli. Catalyzes the demethylation of specific methylglutamate residues introduced into the chemoreceptors (methyl-accepting chemotaxis proteins or MCP) by CheR. Also mediates the irreversible deamidation of specific glutamine residues to glutamic acid. The polypeptide is Protein-glutamate methylesterase/protein-glutamine glutaminase 1 (Xanthomonas campestris pv. campestris (strain ATCC 33913 / DSM 3586 / NCPPB 528 / LMG 568 / P 25)).